Here is a 533-residue protein sequence, read N- to C-terminus: (E)-beta-farnesene synthase (533 aa).

Mg(2+)-binding residues include Asp-286, Asp-290, Asn-430, Ser-434, and Glu-438. Positions 286-290 (DDMMD) match the DDXXD motif motif.

This sequence belongs to the terpene synthase family. The cofactor is Mg(2+). Co(2+) is required as a cofactor. Mn(2+) serves as cofactor.

The protein resides in the cytoplasm. The enzyme catalyses (2E,6E)-farnesyl diphosphate = (E)-beta-farnesene + diphosphate. It participates in secondary metabolite biosynthesis; terpenoid biosynthesis. In terms of biological role, sesquiterpene cyclase catalyzing the production of beta-farnesene and alpha-bergamotene in equal amounts from farnesyl diphosphate. Involved in indirect defense by producing volatile signals attracting natural enemies of herbivores. The protein is (E)-beta-farnesene synthase of Zea mays subsp. huehuetenangensis (San Antonio Huista teosinte).